The sequence spans 810 residues: Phenylalanine--tRNA ligase beta subunit (810 aa).

The 112-residue stretch at 39 to 150 (RSWAAGVVLG…LDLPSGSPVG (112 aa)) folds into the tRNA-binding domain. Positions 407 to 495 (RGEAIINLRL…RLYGYDHFCE (89 aa)) constitute a B5 domain. 4 residues coordinate Mg(2+): Asp-473, Asp-479, Glu-482, and Glu-483. The FDX-ACB domain maps to 716–809 (SPYPAVARDL…LTKQFAVSLR (94 aa)).

Belongs to the phenylalanyl-tRNA synthetase beta subunit family. Type 1 subfamily. As to quaternary structure, tetramer of two alpha and two beta subunits. It depends on Mg(2+) as a cofactor.

Its subcellular location is the cytoplasm. The catalysed reaction is tRNA(Phe) + L-phenylalanine + ATP = L-phenylalanyl-tRNA(Phe) + AMP + diphosphate + H(+). This chain is Phenylalanine--tRNA ligase beta subunit (pheT), found in Synechocystis sp. (strain ATCC 27184 / PCC 6803 / Kazusa).